The primary structure comprises 339 residues: U11/U12 small nuclear ribonucleoprotein 48 kDa protein (339 aa).

Residues 55-82 (VVICPYDSNHHMPKSSLAKHMASCRLRK) form a CHHC U11-48K-type zinc finger. Residues Cys58, His64, His74, and Cys78 each contribute to the Zn(2+) site. Residues Lys87 and Lys104 each participate in a glycyl lysine isopeptide (Lys-Gly) (interchain with G-Cter in SUMO2) cross-link. The segment at 255-339 (HWQEEQEKAE…HSHKRRKQKI (85 aa)) is disordered. Positions 294 to 309 (RHRRDRSRSPHKRKRN) are enriched in basic residues. Residues 310 to 328 (KDKDKNCESRRRKERDGER) are compositionally biased toward basic and acidic residues. Residues 329–339 (HHSHKRRKQKI) show a composition bias toward basic residues.

As to quaternary structure, component of the U11/U12 snRNPs that are part of the U12-type spliceosome. Not found in the major spliceosome.

It is found in the nucleus. Its function is as follows. Likely involved in U12-type 5' splice site recognition. The protein is U11/U12 small nuclear ribonucleoprotein 48 kDa protein (SNRNP48) of Homo sapiens (Human).